The following is a 408-amino-acid chain: Biphenyl dioxygenase system ferredoxin--NAD(+) reductase component (408 aa).

Residue 4-35 (TIAIIGAGLAGSTAARALRAQGYEGRIHLLGD) participates in FAD binding. NAD(+) is bound at residue 145 to 173 (SLVIVGGGLIGCEVATTARKLSVHVTILE).

The protein belongs to the bacterial ring-hydroxylating dioxygenase ferredoxin reductase family. This dioxygenase system consists of four proteins: the two subunits of the hydroxylase component (BphA and BphE), a ferredoxin (BphF) and a ferredoxin reductase (BphG). The cofactor is FAD.

The catalysed reaction is 2 reduced [2Fe-2S]-[ferredoxin] + NAD(+) + H(+) = 2 oxidized [2Fe-2S]-[ferredoxin] + NADH. It participates in xenobiotic degradation; biphenyl degradation. Functionally, part of the electron transfer component of biphenyl dioxygenase, transfers electrons from ferredoxin (BphF) to NADH. This chain is Biphenyl dioxygenase system ferredoxin--NAD(+) reductase component (bphG), found in Paraburkholderia xenovorans (strain LB400).